We begin with the raw amino-acid sequence, 678 residues long: uncharacterized protein (678 aa).

The next 8 helical transmembrane spans lie at F228–L250, L263–Q285, S300–V322, M334–F356, F361–A380, R387–L405, N420–F439, and N455–L477. The interval P653 to E678 is disordered.

It is found in the cell membrane. This is an uncharacterized protein from Treponema pallidum (strain Nichols).